Consider the following 278-residue polypeptide: UPF0276 protein Swit_4400 (278 aa).

This sequence belongs to the UPF0276 family.

In Rhizorhabdus wittichii (strain DSM 6014 / CCUG 31198 / JCM 15750 / NBRC 105917 / EY 4224 / RW1) (Sphingomonas wittichii), this protein is UPF0276 protein Swit_4400.